The sequence spans 612 residues: Elongation factor 4 (612 aa).

Positions 11–193 (KHIRNFSIIA…KLVTDVPAPT (183 aa)) constitute a tr-type G domain. GTP is bound by residues 23 to 28 (DHGKST) and 140 to 143 (NKID).

Belongs to the TRAFAC class translation factor GTPase superfamily. Classic translation factor GTPase family. LepA subfamily.

It is found in the cell membrane. It catalyses the reaction GTP + H2O = GDP + phosphate + H(+). Its function is as follows. Required for accurate and efficient protein synthesis under certain stress conditions. May act as a fidelity factor of the translation reaction, by catalyzing a one-codon backward translocation of tRNAs on improperly translocated ribosomes. Back-translocation proceeds from a post-translocation (POST) complex to a pre-translocation (PRE) complex, thus giving elongation factor G a second chance to translocate the tRNAs correctly. Binds to ribosomes in a GTP-dependent manner. The polypeptide is Elongation factor 4 (Latilactobacillus sakei subsp. sakei (strain 23K) (Lactobacillus sakei subsp. sakei)).